A 231-amino-acid chain; its full sequence is AA9 family lytic polysaccharide monooxygenase F (231 aa).

Residues 1–17 (MLPSISLLLAAALGTSA) form the signal peptide. 3 residues coordinate Cu(2+): H18, D50, and H89. D50 contributes to the O2 binding site. 2 cysteine pairs are disulfide-bonded: C59–C177 and C147–C231. O2 is bound by residues H163 and Q172. Y174 lines the Cu(2+) pocket.

It belongs to the polysaccharide monooxygenase AA9 family. The cofactor is Cu(2+).

It localises to the secreted. It carries out the reaction [(1-&gt;4)-beta-D-glucosyl]n+m + reduced acceptor + O2 = 4-dehydro-beta-D-glucosyl-[(1-&gt;4)-beta-D-glucosyl]n-1 + [(1-&gt;4)-beta-D-glucosyl]m + acceptor + H2O.. In terms of biological role, lytic polysaccharide monooxygenase (LPMO) that depolymerizes crystalline and amorphous polysaccharides via the oxidation of scissile alpha- or beta-(1-4)-glycosidic bonds, yielding C1 oxidation products. Catalysis by LPMOs requires the reduction of the active-site copper from Cu(II) to Cu(I) by a reducing agent and H(2)O(2) or O(2) as a cosubstrate. This chain is AA9 family lytic polysaccharide monooxygenase F (gh61-6), found in Neurospora crassa (strain ATCC 24698 / 74-OR23-1A / CBS 708.71 / DSM 1257 / FGSC 987).